Consider the following 398-residue polypeptide: Nicotinate phosphoribosyltransferase 2 (398 aa).

Histidine 224 is subject to Phosphohistidine; by autocatalysis.

The protein belongs to the NAPRTase family. Transiently phosphorylated on a His residue during the reaction cycle. Phosphorylation strongly increases the affinity for substrates and increases the rate of nicotinate D-ribonucleotide production. Dephosphorylation regenerates the low-affinity form of the enzyme, leading to product release.

The catalysed reaction is nicotinate + 5-phospho-alpha-D-ribose 1-diphosphate + ATP + H2O = nicotinate beta-D-ribonucleotide + ADP + phosphate + diphosphate. It participates in cofactor biosynthesis; NAD(+) biosynthesis; nicotinate D-ribonucleotide from nicotinate: step 1/1. Catalyzes the synthesis of beta-nicotinate D-ribonucleotide from nicotinate and 5-phospho-D-ribose 1-phosphate at the expense of ATP. This Pseudomonas aeruginosa (strain ATCC 15692 / DSM 22644 / CIP 104116 / JCM 14847 / LMG 12228 / 1C / PRS 101 / PAO1) protein is Nicotinate phosphoribosyltransferase 2.